Reading from the N-terminus, the 272-residue chain is Shikimate dehydrogenase (NADP(+)) (272 aa).

Shikimate contacts are provided by residues 14-16 (SKS) and Thr61. The active-site Proton acceptor is Lys65. An NADP(+)-binding site is contributed by Glu77. Shikimate contacts are provided by Asn86 and Asp102. NADP(+) contacts are provided by residues 126-130 (GAGGA), 149-154 (NRTASR), and Met213. Position 215 (Tyr215) interacts with shikimate. Gly237 lines the NADP(+) pocket.

The protein belongs to the shikimate dehydrogenase family. As to quaternary structure, homodimer.

It catalyses the reaction shikimate + NADP(+) = 3-dehydroshikimate + NADPH + H(+). Its pathway is metabolic intermediate biosynthesis; chorismate biosynthesis; chorismate from D-erythrose 4-phosphate and phosphoenolpyruvate: step 4/7. Its function is as follows. Involved in the biosynthesis of the chorismate, which leads to the biosynthesis of aromatic amino acids. Catalyzes the reversible NADPH linked reduction of 3-dehydroshikimate (DHSA) to yield shikimate (SA). This chain is Shikimate dehydrogenase (NADP(+)), found in Salmonella paratyphi A (strain ATCC 9150 / SARB42).